Here is a 60-residue protein sequence, read N- to C-terminus: Large ribosomal subunit protein bL32 (60 aa).

The protein belongs to the bacterial ribosomal protein bL32 family.

This is Large ribosomal subunit protein bL32 from Latilactobacillus sakei subsp. sakei (strain 23K) (Lactobacillus sakei subsp. sakei).